Reading from the N-terminus, the 155-residue chain is SsrA-binding protein (155 aa).

It belongs to the SmpB family.

Its subcellular location is the cytoplasm. Required for rescue of stalled ribosomes mediated by trans-translation. Binds to transfer-messenger RNA (tmRNA), required for stable association of tmRNA with ribosomes. tmRNA and SmpB together mimic tRNA shape, replacing the anticodon stem-loop with SmpB. tmRNA is encoded by the ssrA gene; the 2 termini fold to resemble tRNA(Ala) and it encodes a 'tag peptide', a short internal open reading frame. During trans-translation Ala-aminoacylated tmRNA acts like a tRNA, entering the A-site of stalled ribosomes, displacing the stalled mRNA. The ribosome then switches to translate the ORF on the tmRNA; the nascent peptide is terminated with the 'tag peptide' encoded by the tmRNA and targeted for degradation. The ribosome is freed to recommence translation, which seems to be the essential function of trans-translation. This Geobacillus sp. (strain WCH70) protein is SsrA-binding protein.